The primary structure comprises 235 residues: 2-C-methyl-D-erythritol 4-phosphate cytidylyltransferase (235 aa).

It belongs to the IspD/TarI cytidylyltransferase family. IspD subfamily.

The enzyme catalyses 2-C-methyl-D-erythritol 4-phosphate + CTP + H(+) = 4-CDP-2-C-methyl-D-erythritol + diphosphate. It functions in the pathway isoprenoid biosynthesis; isopentenyl diphosphate biosynthesis via DXP pathway; isopentenyl diphosphate from 1-deoxy-D-xylulose 5-phosphate: step 2/6. In terms of biological role, catalyzes the formation of 4-diphosphocytidyl-2-C-methyl-D-erythritol from CTP and 2-C-methyl-D-erythritol 4-phosphate (MEP). This Mycolicibacterium paratuberculosis (strain ATCC BAA-968 / K-10) (Mycobacterium paratuberculosis) protein is 2-C-methyl-D-erythritol 4-phosphate cytidylyltransferase.